A 108-amino-acid polypeptide reads, in one-letter code: UPF0060 membrane protein Sputw3181_1172 (108 aa).

4 helical membrane-spanning segments follow: residues 3-23, 31-51, 63-83, and 87-107; these read VITT…GCYL, GASA…AWLL, AAYG…VDGI, and RWDL…MFAP.

The protein belongs to the UPF0060 family.

Its subcellular location is the cell inner membrane. The protein is UPF0060 membrane protein Sputw3181_1172 of Shewanella sp. (strain W3-18-1).